The primary structure comprises 372 residues: Adaptive-response sensory kinase SasA (372 aa).

One can recognise a Histidine kinase domain in the interval 147-360; that stretch reads MVAHELRTPL…CFHFTVPVWQ (214 aa). The residue at position 150 (His-150) is a Phosphohistidine; by autocatalysis.

Homooligomerizes. Interacts with KaiC. Participates in the KaiBC complex, whose core is composed of a KaiC homohexamer and 6 KaiB.

The enzyme catalyses ATP + protein L-histidine = ADP + protein N-phospho-L-histidine.. Functionally, member of the two-component regulatory system SasA/RpaA involved in genome-wide circadian gene expression. One of several clock output pathways. Participates in the Kai clock protein complex, the main circadian regulator in cyanobacteria, via its interaction with KaiC. KaiC enhances the autophosphorylation activity of SasA, which then transfers its phosphate group to RpaA to activate it. In addition to its output function, recruits fold-shifted KaiB (KaiB(fs)) to KaiC to cooperatively form the KaiB(6):KaiC(6) complex (independent of SasA kinase activity). Required for robustness of the circadian rhythm of gene expression and is involved in clock output, also required for adaptation to light/dark cycles. This is Adaptive-response sensory kinase SasA from Prochlorococcus marinus (strain MIT 9215).